We begin with the raw amino-acid sequence, 116 residues long: Large ribosomal subunit protein uL18 (116 aa).

The protein belongs to the universal ribosomal protein uL18 family. In terms of assembly, part of the 50S ribosomal subunit; part of the 5S rRNA/L5/L18/L25 subcomplex. Contacts the 5S and 23S rRNAs.

Functionally, this is one of the proteins that bind and probably mediate the attachment of the 5S RNA into the large ribosomal subunit, where it forms part of the central protuberance. The protein is Large ribosomal subunit protein uL18 of Shewanella amazonensis (strain ATCC BAA-1098 / SB2B).